The sequence spans 526 residues: MNNVKELIDSGILKTNKIHYNLPVEELIKIAVEKEGGVIAKNGALCINTGKYTGRSPEDRFIVDEPSVHDHINWNKGNKGISAQVFDNLFNKAMAHVKDKELFVFEGFVGSDLDYRMPIRVINEFAYQNLFASQMFIKPKAGERENFDPEFTVLALPDLKADPAVDGTNSEVFIILNFAQKIVLIGGTRYSGEIKKSIFTVMNYLLPFKDVLPMHCSANIGEDGNVALFFGLSGTGKTTLSADNNRKLIGDDEHGWTANGVFNFEGGCYAKCINLTEEQEPQIWNAIKHGAILENIVIDENTGHIDYDDDRYTENTRAAYPVEYIDDAVLEGKGGIPNTIIFLTADATGVLPPIAKLTKEQAMYHFMSGYTSKLAGTERGIVEPTATFSTCFGGPFMLLKPQTYAKLLGEKIEKYNTRVFLVNTGWTGGPYGIGSRMKLKYTRSMVRAAIKGELDQVEYIKDPIFNLSIPTTCPEVPVEVLEPSKTWDNQDEYDQKANELAKSFVENFKKFDDVSDDIKNVNPKVQ.

Residues Arg-55, Tyr-190, and Lys-196 each contribute to the substrate site. ATP is bound by residues Lys-196, His-215, and Gly-231 to Thr-239. 2 residues coordinate Mn(2+): Lys-196 and His-215. Residue Asp-252 participates in Mn(2+) binding. Positions 280, 317, and 442 each coordinate ATP. Arg-317 provides a ligand contact to substrate.

Belongs to the phosphoenolpyruvate carboxykinase (ATP) family. Mn(2+) serves as cofactor.

The protein resides in the cytoplasm. It carries out the reaction oxaloacetate + ATP = phosphoenolpyruvate + ADP + CO2. The protein operates within carbohydrate biosynthesis; gluconeogenesis. Involved in the gluconeogenesis. Catalyzes the conversion of oxaloacetate (OAA) to phosphoenolpyruvate (PEP) through direct phosphoryl transfer between the nucleoside triphosphate and OAA. The protein is Phosphoenolpyruvate carboxykinase (ATP) of Alkaliphilus oremlandii (strain OhILAs) (Clostridium oremlandii (strain OhILAs)).